The chain runs to 360 residues: Putative beta-glucosidase 15 (360 aa).

Basic and acidic residues-rich tracts occupy residues 1 to 11 (MARRRMGEEGK) and 47 to 67 (GRRE…ERKG). Disordered stretches follow at residues 1–21 (MARR…NGRQ) and 35–103 (GWRS…RAER). The segment covering 75-86 (GKRRRERRRGGR) has biased composition (basic residues). Residue tyrosine 183 participates in a beta-D-glucoside binding. A disulfide bond links cysteine 191 and cysteine 196. Residues glutamate 254, tryptophan 301, 308–309 (EW), and phenylalanine 317 each bind a beta-D-glucoside. The active-site Nucleophile is glutamate 254. Asparagine 346 carries N-linked (GlcNAc...) asparagine glycosylation.

It belongs to the glycosyl hydrolase 1 family.

The catalysed reaction is Hydrolysis of terminal, non-reducing beta-D-glucosyl residues with release of beta-D-glucose.. The polypeptide is Putative beta-glucosidase 15 (BGLU15) (Oryza sativa subsp. japonica (Rice)).